A 224-amino-acid polypeptide reads, in one-letter code: Casparian strip membrane protein 3 (224 aa).

Positions 1 to 30 are disordered; that stretch reads MESKKEGVASAPTSPESRRTRSNGKGKTIA. Over 1 to 57 the chain is Cytoplasmic; the sequence is MESKKEGVASAPTSPESRRTRSNGKGKTIAEATPPSVTVVSTKVTPSPRGGWRKGAA. A helical transmembrane segment spans residues 58-78; it reads ILDFILRLGAISSAIGAAAVM. Residues 79 to 105 are Extracellular-facing; that stretch reads GNNEQILPFFTQFFQFHVQWDDFPMFQ. The chain crosses the membrane as a helical span at residues 106–126; that stretch reads FFVFANGAAVVFLILSLPFSI. Residues 127-138 lie on the Cytoplasmic side of the membrane; sequence VCIVRPFAVGPR. Residues 139–159 traverse the membrane as a helical segment; the sequence is LLLVIVDIFAMALVIAAASAA. Over 160–191 the chain is Extracellular; the sequence is AAVVYLAHNGSQDANWIAICQQYTDFCQVTSQ. Asn168 carries N-linked (GlcNAc...) asparagine glycosylation. The chain crosses the membrane as a helical span at residues 192 to 212; the sequence is AVVASFVAAVFLICLIVLSSV. The Cytoplasmic segment spans residues 213–224; that stretch reads ALKKGLKREFGW.

Belongs to the Casparian strip membrane proteins (CASP) family. Homodimer and heterodimers.

Its subcellular location is the cell membrane. Functionally, regulates membrane-cell wall junctions and localized cell wall deposition. Required for establishment of the Casparian strip membrane domain (CSD) and the subsequent formation of Casparian strips, a cell wall modification of the root endodermis that determines an apoplastic barrier between the intraorganismal apoplasm and the extraorganismal apoplasm and prevents lateral diffusion. The chain is Casparian strip membrane protein 3 from Vigna unguiculata (Cowpea).